The sequence spans 420 residues: Disease resistance protein CHS1 (420 aa).

Positions 12-167 constitute a TIR domain; it reads RELDVFLSFS…QIADDIRLMF (156 aa). Glu86 is an active-site residue. The 222-residue stretch at 185 to 406 folds into the NB-ARC domain; the sequence is MKALYALLAL…KDIKEVWKIM (222 aa).

As to expression, mostly expressed in leaves and flowers (mainly in sepals), and, at a lower intensity, in stems. Present at low levels in roots and seeds.

Its subcellular location is the cytoplasm. It is found in the nucleus. It carries out the reaction NAD(+) + H2O = ADP-D-ribose + nicotinamide + H(+). Its function is as follows. Confers resistance to low temperatures by limiting chloroplast damage and cell death, thus maintaining growth homeostasis. Regulates steryl-esters and sterols accumulation. Limits leaf necrosis associated with virulent bacterial infection (e.g. Pseudomonas syringae pv. tomato DC3000). The protein is Disease resistance protein CHS1 of Arabidopsis thaliana (Mouse-ear cress).